Here is a 727-residue protein sequence, read N- to C-terminus: DNA replication licensing factor MCM5 (727 aa).

The MCM domain occupies valine 325–isoleucine 531. Position 375–382 (glycine 375–serine 382) interacts with ATP. Positions serine 507–aspartate 510 match the Arginine finger motif.

This sequence belongs to the MCM family. In terms of assembly, component of the minichromosome maintenance (MCM) complex, a heterotetramer composed of MCM2, MCM3, MCM4, MCM5, MCM6 and MCM7. Interacts with EGT1. Expressed in shoot apex and flower buds.

The protein localises to the nucleus. Its subcellular location is the cytoplasm. It catalyses the reaction ATP + H2O = ADP + phosphate + H(+). Probable component of the MCM2-7 complex (MCM complex) that may function as a DNA helicase and which is essential to undergo a single round of replication initiation and elongation per cell cycle in eukaryotic cells. In Arabidopsis thaliana (Mouse-ear cress), this protein is DNA replication licensing factor MCM5 (MCM5).